A 469-amino-acid chain; its full sequence is Serine hydroxymethyltransferase, cytosolic (469 aa).

Lys248 carries the N6-(pyridoxal phosphate)lysine modification.

It belongs to the SHMT family. In terms of assembly, homotetramer. Pyridoxal 5'-phosphate is required as a cofactor.

Its subcellular location is the cytoplasm. It catalyses the reaction (6R)-5,10-methylene-5,6,7,8-tetrahydrofolate + glycine + H2O = (6S)-5,6,7,8-tetrahydrofolate + L-serine. Its pathway is one-carbon metabolism; tetrahydrofolate interconversion. In terms of biological role, interconversion of serine and glycine. This chain is Serine hydroxymethyltransferase, cytosolic (SHM2), found in Eremothecium gossypii (strain ATCC 10895 / CBS 109.51 / FGSC 9923 / NRRL Y-1056) (Yeast).